Here is a 220-residue protein sequence, read N- to C-terminus: Large ribosomal subunit protein uL3 (220 aa).

A disordered region spans residues 61-81 (KGSKSNKYANKPAEGHAKKAD).

The protein belongs to the universal ribosomal protein uL3 family. In terms of assembly, part of the 50S ribosomal subunit. Forms a cluster with proteins L14 and L19.

Functionally, one of the primary rRNA binding proteins, it binds directly near the 3'-end of the 23S rRNA, where it nucleates assembly of the 50S subunit. This is Large ribosomal subunit protein uL3 from Staphylococcus epidermidis (strain ATCC 35984 / DSM 28319 / BCRC 17069 / CCUG 31568 / BM 3577 / RP62A).